The sequence spans 376 residues: uncharacterized protein (376 aa).

An N-terminal signal peptide occupies residues 1-28 (MCKPRVWRIAHTIVHVGALLLGTSQLTT). Cys-29 carries N-palmitoyl cysteine lipidation. Residue Cys-29 is the site of S-diacylglycerol cysteine attachment.

This sequence belongs to the TP013X lipoprotein family.

Its subcellular location is the cell membrane. This is an uncharacterized protein from Treponema pallidum (strain Nichols).